A 717-amino-acid polypeptide reads, in one-letter code: P-loop NTPase domain-containing protein LPA1 homolog 2 (717 aa).

Disordered regions lie at residues 235–259 (KKLK…SSTT) and 532–629 (HYSS…DTIS). Polar residues-rich tracts occupy residues 243–259 (VNSN…SSTT) and 532–545 (HYSS…TSDG). A compositionally biased stretch (acidic residues) spans 559–582 (SDEDDEEGDDDFHEPDSDEDLSDN). Over residues 583–602 (NDERNRDEIGSVDEESTKSD) the composition is skewed to basic and acidic residues.

Its function is as follows. May be not required for the accumulation of phytic acid in seeds. Phytic acid is the primary storage form of phosphorus in cereal grains and other plant seeds. This Arabidopsis thaliana (Mouse-ear cress) protein is P-loop NTPase domain-containing protein LPA1 homolog 2.